The sequence spans 112 residues: Iron-sulfur cluster insertion protein ErpA (112 aa).

3 residues coordinate iron-sulfur cluster: Cys-40, Cys-104, and Cys-106.

The protein belongs to the HesB/IscA family. Homodimer. It depends on iron-sulfur cluster as a cofactor.

Required for insertion of 4Fe-4S clusters for at least IspG. The polypeptide is Iron-sulfur cluster insertion protein ErpA (Pseudoalteromonas translucida (strain TAC 125)).